Here is a 229-residue protein sequence, read N- to C-terminus: GTP-binding protein Di-Ras3 (229 aa).

Residues glycine 44–serine 51, arginine 63–threonine 69, aspartate 91–glycine 95, asparagine 152–aspartate 155, and alanine 182–lysine 183 each bind GTP. The short motif at tyrosine 66–tyrosine 74 is the Effector region element. Cysteine 226 carries the post-translational modification Cysteine methyl ester. Cysteine 226 carries S-geranylgeranyl cysteine lipidation. The propeptide at isoleucine 227–methionine 229 is removed in mature form.

Belongs to the small GTPase superfamily. Di-Ras family. As to expression, expressed in normal ovarian and breast epithelial cells but not in ovarian and breast cancers.

Its subcellular location is the cell membrane. The sequence is that of GTP-binding protein Di-Ras3 (DIRAS3) from Homo sapiens (Human).